The primary structure comprises 274 residues: Large ribosomal subunit protein uL2 (274 aa).

The interval 224-256 is disordered; that stretch reads VMNPVDHPHGGGEGKTGEGRHPVDPWGNLTKGY. A compositionally biased stretch (basic and acidic residues) spans 229 to 246; it reads DHPHGGGEGKTGEGRHPV.

It belongs to the universal ribosomal protein uL2 family. As to quaternary structure, part of the 50S ribosomal subunit. Forms a bridge to the 30S subunit in the 70S ribosome.

Its function is as follows. One of the primary rRNA binding proteins. Required for association of the 30S and 50S subunits to form the 70S ribosome, for tRNA binding and peptide bond formation. It has been suggested to have peptidyltransferase activity; this is somewhat controversial. Makes several contacts with the 16S rRNA in the 70S ribosome. The sequence is that of Large ribosomal subunit protein uL2 from Polaromonas sp. (strain JS666 / ATCC BAA-500).